Reading from the N-terminus, the 88-residue chain is Small ribosomal subunit protein uS17 (88 aa).

This sequence belongs to the universal ribosomal protein uS17 family. As to quaternary structure, part of the 30S ribosomal subunit.

Functionally, one of the primary rRNA binding proteins, it binds specifically to the 5'-end of 16S ribosomal RNA. The chain is Small ribosomal subunit protein uS17 from Pseudomonas fluorescens (strain ATCC BAA-477 / NRRL B-23932 / Pf-5).